The chain runs to 127 residues: Large ribosomal subunit protein eL8 (127 aa).

This sequence belongs to the eukaryotic ribosomal protein eL8 family. As to quaternary structure, part of the 50S ribosomal subunit. Probably part of the RNase P complex.

It is found in the cytoplasm. Functionally, multifunctional RNA-binding protein that recognizes the K-turn motif in ribosomal RNA, the RNA component of RNase P, box H/ACA, box C/D and box C'/D' sRNAs. This is Large ribosomal subunit protein eL8 from Saccharolobus islandicus (strain Y.N.15.51 / Yellowstone #2) (Sulfolobus islandicus).